Consider the following 245-residue polypeptide: Ribonuclease PH (245 aa).

Phosphate is bound by residues R93 and 131 to 133 (GTR).

The protein belongs to the RNase PH family. In terms of assembly, homohexameric ring arranged as a trimer of dimers.

It catalyses the reaction tRNA(n+1) + phosphate = tRNA(n) + a ribonucleoside 5'-diphosphate. In terms of biological role, phosphorolytic 3'-5' exoribonuclease that plays an important role in tRNA 3'-end maturation. Removes nucleotide residues following the 3'-CCA terminus of tRNAs; can also add nucleotides to the ends of RNA molecules by using nucleoside diphosphates as substrates, but this may not be physiologically important. Probably plays a role in initiation of 16S rRNA degradation (leading to ribosome degradation) during starvation. The polypeptide is Ribonuclease PH (Corynebacterium efficiens (strain DSM 44549 / YS-314 / AJ 12310 / JCM 11189 / NBRC 100395)).